A 468-amino-acid chain; its full sequence is Probable serine/threonine-protein phosphatase 2A activator 2 (468 aa).

Residues 412-424 (STTTNNNNNNITS) show a composition bias toward low complexity. The interval 412-468 (STTTNNNNNNITSGDHCNDNEQQCSETHNHDHNHNHNHNHNHPPPPPQQQRSYFPLD) is disordered.

Belongs to the PTPA-type PPIase family.

The protein localises to the cytoplasm. The enzyme catalyses [protein]-peptidylproline (omega=180) = [protein]-peptidylproline (omega=0). PPIases accelerate the folding of proteins. It catalyzes the cis-trans isomerization of proline imidic peptide bonds in oligopeptides. Acts as a regulatory subunit for PP2A-like phosphatases modulating their activity or substrate specificity, probably by inducing a conformational change in the catalytic subunit, a direct target of the PPIase. This is Probable serine/threonine-protein phosphatase 2A activator 2 (ppp2r4B) from Dictyostelium discoideum (Social amoeba).